The primary structure comprises 164 residues: Succinate dehydrogenase assembly factor 3, mitochondrial (164 aa).

The transit peptide at 1–51 directs the protein to the mitochondrion; the sequence is MRPTLLRLANASGPLPLSVSQASVQLIPPIPLYRRLLRAHRLLPVDMRYMG. Positions 136–145 are enriched in basic and acidic residues; that stretch reads KSPEQIEREA. Positions 136–164 are disordered; sequence KSPEQIEREANSAGVSPVNPNDPTTAGNS. Polar residues predominate over residues 153–164; the sequence is VNPNDPTTAGNS.

This sequence belongs to the complex I LYR family. SDHAF3 subfamily. As to quaternary structure, interacts with the iron-sulfur protein subunit within the SDH catalytic dimer.

It is found in the mitochondrion matrix. Plays an essential role in the assembly of succinate dehydrogenase (SDH), an enzyme complex (also referred to as respiratory complex II) that is a component of both the tricarboxylic acid (TCA) cycle and the mitochondrial electron transport chain, and which couples the oxidation of succinate to fumarate with the reduction of ubiquinone (coenzyme Q) to ubiquinol. Promotes maturation of the iron-sulfur protein subunit of the SDH catalytic dimer, protecting it from the deleterious effects of oxidants. May act together with SDHAF1. This chain is Succinate dehydrogenase assembly factor 3, mitochondrial, found in Cryptococcus neoformans var. neoformans serotype D (strain B-3501A) (Filobasidiella neoformans).